The sequence spans 370 residues: DNA primase large subunit PriL (370 aa).

[4Fe-4S] cluster contacts are provided by Cys-230, Cys-301, Cys-310, and Cys-317. Positions 337–370 are disordered; it reads EGEEAQGKEQGKEKDDGKEKENGKESEVKKKKEK.

The protein belongs to the eukaryotic-type primase large subunit family. As to quaternary structure, heterodimer of a small subunit (PriS) and a large subunit (PriL). It depends on [4Fe-4S] cluster as a cofactor.

Functionally, regulatory subunit of DNA primase, an RNA polymerase that catalyzes the synthesis of short RNA molecules used as primers for DNA polymerase during DNA replication. Stabilizes and modulates the activity of the small subunit, increasing the rate of DNA synthesis, and conferring RNA synthesis capability. The DNA polymerase activity may enable DNA primase to also catalyze primer extension after primer synthesis. May also play a role in DNA repair. The chain is DNA primase large subunit PriL from Methanosarcina mazei (strain ATCC BAA-159 / DSM 3647 / Goe1 / Go1 / JCM 11833 / OCM 88) (Methanosarcina frisia).